The sequence spans 103 residues: 4-amino-4-deoxychorismate mutase (103 aa).

One can recognise a Chorismate mutase domain in the interval 1 to 92; that stretch reads MTEQNELQRL…EMCRVEDLVM (92 aa).

The catalysed reaction is 4-amino-4-deoxychorismate = 4-amino-4-deoxyprephenate. The protein operates within antibiotic biosynthesis. Functionally, involved in chloramphenicol biosynthesis. Probably catalyzes the conversion of 4-amino-4-deoxychorismate to 4-amino-4-deoxyprephenate. This Streptomyces venezuelae (strain ATCC 10712 / CBS 650.69 / DSM 40230 / JCM 4526 / NBRC 13096 / PD 04745) protein is 4-amino-4-deoxychorismate mutase.